The primary structure comprises 63 residues: Small ribosomal subunit protein uS14 (63 aa).

Residues C26, C29, C42, and C45 each contribute to the Zn(2+) site.

The protein belongs to the universal ribosomal protein uS14 family. Zinc-binding uS14 subfamily. Part of the 30S ribosomal subunit. Contacts proteins S3 and S10. Zn(2+) is required as a cofactor.

Functionally, binds 16S rRNA, required for the assembly of 30S particles and may also be responsible for determining the conformation of the 16S rRNA at the A site. This chain is Small ribosomal subunit protein uS14, found in Gloeobacter violaceus (strain ATCC 29082 / PCC 7421).